An 85-amino-acid chain; its full sequence is Small ribosomal subunit protein bS16 (85 aa).

Belongs to the bacterial ribosomal protein bS16 family.

This chain is Small ribosomal subunit protein bS16, found in Xanthomonas euvesicatoria pv. vesicatoria (strain 85-10) (Xanthomonas campestris pv. vesicatoria).